The sequence spans 202 residues: Protein lin-28 homolog A (202 aa).

The tract at residues 1-31 (MGSVSNQQFAGAKPGEEPSGDSPKAENESQP) is disordered. Residues 33 to 106 (HGSGICKWFN…GLESIRVTGP (74 aa)) form the CSD domain. A flexible linker region spans residues 107–130 (GGVFCIGSERRPKSKSLQKRRSKG). 2 consecutive CCHC-type zinc fingers follow at residues 131 to 148 (DRCYNCGGLDHHAKECKL) and 153 to 170 (KKCHFCQSISHMVANCPA). Zn(2+)-binding residues include C133, C136, H141, C146, C155, C158, H163, and C168. The tract at residues 169–202 (PAKAQQSPSSQGKPAYFREKEDMHSSALLPETRE) is disordered.

The protein belongs to the lin-28 family. Monomer.

It is found in the cytoplasm. The protein localises to the rough endoplasmic reticulum. The protein resides in the P-body. Its subcellular location is the stress granule. It localises to the nucleus. It is found in the nucleolus. Functionally, RNA-binding protein that inhibits processing of pre-let-7 miRNAs and regulates translation of mRNAs that control developmental timing, pluripotency and metabolism. Seems to recognize a common structural G-quartet (G4) feature in its miRNA and mRNA targets. 'Translational enhancer' that drives specific mRNAs to polysomes and increases the efficiency of protein synthesis. Its association with the translational machinery and target mRNAs results in an increased number of initiation events per molecule of mRNA and, indirectly, in mRNA stabilization. Suppressor of microRNA (miRNA) biogenesis, including that of let-7. Binds specific target miRNA precursors (pre-miRNAs), recognizing an 5'-GGAG-3' motif found in their terminal loop, and recruits uridylyltransferase. This results in the terminal uridylation of target pre-miRNAs. Uridylated pre-miRNAs fail to be processed by Dicer and undergo degradation. Localized to the periendoplasmic reticulum area, binds to a large number of spliced mRNAs and inhibits the translation of mRNAs destined for the ER, reducing the synthesis of transmembrane proteins, ER or Golgi lumen proteins, and secretory proteins. Binds to and enhances the translation of mRNAs for several metabolic enzymes, increasing glycolysis and oxidative phosphorylation. Which, with the let-7 repression may enhance tissue repair in adult tissue. In Gallus gallus (Chicken), this protein is Protein lin-28 homolog A (LIN28A).